The primary structure comprises 282 residues: Bifunctional protein FolD (282 aa).

Residues 165–167 (NRS), Ser190, and Ile231 each bind NADP(+).

It belongs to the tetrahydrofolate dehydrogenase/cyclohydrolase family. In terms of assembly, homodimer.

The enzyme catalyses (6R)-5,10-methylene-5,6,7,8-tetrahydrofolate + NADP(+) = (6R)-5,10-methenyltetrahydrofolate + NADPH. The catalysed reaction is (6R)-5,10-methenyltetrahydrofolate + H2O = (6R)-10-formyltetrahydrofolate + H(+). It functions in the pathway one-carbon metabolism; tetrahydrofolate interconversion. Functionally, catalyzes the oxidation of 5,10-methylenetetrahydrofolate to 5,10-methenyltetrahydrofolate and then the hydrolysis of 5,10-methenyltetrahydrofolate to 10-formyltetrahydrofolate. The polypeptide is Bifunctional protein FolD (Clostridium botulinum (strain ATCC 19397 / Type A)).